The following is a 434-amino-acid chain: Chemotaxis protein MotC (434 aa).

A signal peptide spans 1–15 (MLKRLCTILAASALA). The disordered stretch occupies residues 344–417 (VVRPPLGESP…DPALDGFLAS (74 aa)).

Its subcellular location is the periplasm. Required for the rotation of the flagellar motor. Might control the energy flux or coupling that drives flagellar rotation. The chain is Chemotaxis protein MotC (motC) from Rhizobium meliloti (strain 1021) (Ensifer meliloti).